Reading from the N-terminus, the 660-residue chain is Phosphatidylinositol-3-phosphate phosphatase MTMR7 (660 aa).

One can recognise a Myotubularin phosphatase domain in the interval 126–504 (GWLLVDLSEE…FTYKFWNGMY (379 aa)). Residues Asn-250, Asn-275, and Ile-276 each coordinate a 1,2-diacyl-sn-glycero-3-phospho-(1D-myo-inositol-3-phosphate). Residue Cys-338 is the Phosphocysteine intermediate of the active site. A 1,2-diacyl-sn-glycero-3-phospho-(1D-myo-inositol-3-phosphate) contacts are provided by Ser-339, Asp-340, Gly-341, Trp-342, Asp-343, Arg-344, and Arg-384. Residues 514–548 (RQSVTDYLMAVKEESQQLEEELESLEERLEKIQKV) adopt a coiled-coil conformation. Positions 550–660 (LHGTKVKSKQ…DSDEAVFLTA (111 aa)) are disordered. Positions 566–596 (SGFSTSDHSTANTPQDYSGNSKSFPSRSPSQ) are enriched in polar residues. Thr-578 carries the phosphothreonine modification. Positions 641 to 653 (APSEDSGKDRDSD) are enriched in basic and acidic residues.

This sequence belongs to the protein-tyrosine phosphatase family. Non-receptor class myotubularin subfamily. In terms of assembly, heterodimer (via C-terminus) with MTMR9 (via coiled coil domain); the interaction enhances MTMR7 catalytic activity. Does not homodimerize. Interacts with RAB1B (in GDP-bound form). In terms of tissue distribution, highly expressed in brain (at protein level). Expressed at low levels in liver, kidney and testis.

The protein resides in the cytoplasm. It localises to the endomembrane system. It carries out the reaction a 1,2-diacyl-sn-glycero-3-phospho-(1D-myo-inositol-3-phosphate) + H2O = a 1,2-diacyl-sn-glycero-3-phospho-(1D-myo-inositol) + phosphate. It catalyses the reaction 1D-myo-inositol 1,3-bisphosphate + H2O = 1D-myo-inositol 1-phosphate + phosphate. Interaction with MTMR9 increases phosphatase activity. Functionally, lipid phosphatase that specifically dephosphorylates the D-3 position of phosphatidylinositol 3-phosphate (PtdIns(3)P) and inositol 1,3-bisphosphate (Ins(1,3)P2). This chain is Phosphatidylinositol-3-phosphate phosphatase MTMR7, found in Mus musculus (Mouse).